The chain runs to 262 residues: MWSQIPGTLMRTSSLPAVIEASGNDDWKKRKEAQSLKRLEVKKKRIERRNSLTCNTSKEAAGQSPEEMNANTDKLVSSDETIASANESHSSGKHLVKGLPPKYQATITSQDSSSAMRKKPNSAFKGTAITEEQNSSSSVPSSGEAISSVTAPSLPALSLVPITATLGSREDQSILGRAGARANGMGDVERRMMQEMPGVFTKGLSNGSRVEGFLYKYSKGEVRIVCICHGSFLTPSEFVEHAGAGKVDNPLRHIVVSATPNL.

A disordered region spans residues 48–69; it reads RRNSLTCNTSKEAAGQSPEEMN.

Belongs to the Ninja family.

Its subcellular location is the nucleus. This chain is Ninja-family protein 3, found in Zea mays (Maize).